Consider the following 37-residue polypeptide: Large ribosomal subunit protein bL36A (37 aa).

This sequence belongs to the bacterial ribosomal protein bL36 family.

This Actinobacillus pleuropneumoniae serotype 3 (strain JL03) protein is Large ribosomal subunit protein bL36A.